Consider the following 246-residue polypeptide: Ribonuclease PH (246 aa).

Residues Arg91 and 129 to 131 (GTR) contribute to the phosphate site.

The protein belongs to the RNase PH family. In terms of assembly, homohexameric ring arranged as a trimer of dimers.

It carries out the reaction tRNA(n+1) + phosphate = tRNA(n) + a ribonucleoside 5'-diphosphate. Its function is as follows. Phosphorolytic 3'-5' exoribonuclease that plays an important role in tRNA 3'-end maturation. Removes nucleotide residues following the 3'-CCA terminus of tRNAs; can also add nucleotides to the ends of RNA molecules by using nucleoside diphosphates as substrates, but this may not be physiologically important. Probably plays a role in initiation of 16S rRNA degradation (leading to ribosome degradation) during starvation. The polypeptide is Ribonuclease PH (Burkholderia ambifaria (strain ATCC BAA-244 / DSM 16087 / CCUG 44356 / LMG 19182 / AMMD) (Burkholderia cepacia (strain AMMD))).